A 28-amino-acid chain; its full sequence is Potassium channel toxin alpha-KTx 9.7 (28 aa).

Cystine bridges form between Cys3–Cys19, Cys6–Cys24, and Cys10–Cys26.

Expressed by the venom gland.

The protein resides in the secreted. Calcium channel activator. Rapidly and reversibly activates ryanodine receptor 1 (RYR1). This is Potassium channel toxin alpha-KTx 9.7 from Hottentotta judaicus (Black scorpion).